A 438-amino-acid polypeptide reads, in one-letter code: Probable 26S proteasome regulatory subunit rpn-6.1 (438 aa).

Over residues 1–10 (MRETSSREDT) the composition is skewed to basic and acidic residues. The interval 1-30 (MRETSSREDTNNIGKAPEMSGGTIMDTMTS) is disordered. The PCI domain occupies 239–408 (DFKTAFSYFY…GMLIVFEIAV (170 aa)).

Belongs to the proteasome subunit S9 family. Component of the lid subcomplex of the 19S proteasome regulatory particle complex (also named PA700 complex). The 26S proteasome consists of a 20S proteasome core and two 19S regulatory subunits.

In terms of biological role, component of the lid subcomplex of the 26S proteasome, a multiprotein complex involved in the ATP-dependent degradation of ubiquitinated proteins. In the complex, rpn-6.1 is required for proteasome assembly. Plays a key role in increased proteasome activity in response to proteotoxic stress: induced by daf-16, promoting enhanced assembly of the 26S proteasome and higher proteasome activity, leading to extended lifespan. This is Probable 26S proteasome regulatory subunit rpn-6.1 from Caenorhabditis elegans.